The sequence spans 409 residues: Argininosuccinate synthase (409 aa).

Residues 10-18 (AYSGGLDTS) and alanine 37 contribute to the ATP site. L-citrulline-binding residues include tyrosine 90 and serine 95. Residue glycine 120 coordinates ATP. L-aspartate contacts are provided by threonine 122, asparagine 126, and aspartate 127. Asparagine 126 is an L-citrulline binding site. Positions 130, 182, 191, 267, and 279 each coordinate L-citrulline.

This sequence belongs to the argininosuccinate synthase family. Type 1 subfamily. Homotetramer.

The protein resides in the cytoplasm. The enzyme catalyses L-citrulline + L-aspartate + ATP = 2-(N(omega)-L-arginino)succinate + AMP + diphosphate + H(+). It participates in amino-acid biosynthesis; L-arginine biosynthesis; L-arginine from L-ornithine and carbamoyl phosphate: step 2/3. The chain is Argininosuccinate synthase from Azoarcus sp. (strain BH72).